Reading from the N-terminus, the 506-residue chain is Protein EFFECTOR OF TRANSCRIPTION 1 (506 aa).

The GIY-YIG domain maps to 185 to 225 (AFQGLYELSHDHGRKDDVLVANLGQPESIRSRLRSYSRSFA). Positions 234 to 247 (LSQTILPTTQNKSD) are enriched in polar residues. The disordered stretch occupies residues 234-298 (LSQTILPTTQ…VSEKHDDIVD (65 aa)). Over residues 248-272 (NQTEEKKSDSEEEREVSSDAAEKES) the composition is skewed to basic and acidic residues. The span at 273 to 288 (NSLPSILRLSRSRPQP) shows a compositional bias: low complexity. 2 Cx9Cx9RCx2HK repeats span residues 306-331 (CGVL…TEHK) and 361-386 (CGVI…EDHK). A compositionally biased stretch (basic and acidic residues) spans 404–413 (KAVNEDKSKP). Residues 404–426 (KAVNEDKSKPETSTGMNQEGSGL) are disordered. Residues 414–423 (ETSTGMNQEG) show a composition bias toward polar residues. Cx9Cx9RCx2HK repeat units lie at residues 428 to 453 (CEAT…WQHK) and 475 to 500 (CGFK…EEHK).

Expressed in rosette leaves, stipules, stems, flowers, siliques and mature seeds. Expressed in the vascular bundles of xylem in shoot parenchyma cells. Expressed in the remnant cytoplasm of differentiated fiber cells and in protoxylem element of parenchymal cells.

Its subcellular location is the cytoplasm. It localises to the nucleus. In terms of biological role, transcriptional regulator involved in the regulation of cell differentiation in meristems. Binds DNA without sequence preference. The chain is Protein EFFECTOR OF TRANSCRIPTION 1 from Arabidopsis thaliana (Mouse-ear cress).